The chain runs to 204 residues: dITP/XTP pyrophosphatase (204 aa).

A substrate-binding site is contributed by 11–16 (SRNRKK). The active-site Proton acceptor is the aspartate 76. Aspartate 76 is a binding site for Mg(2+). Residues serine 77, 158–161 (FGYD), lysine 181, and 186–187 (HR) each bind substrate.

Belongs to the HAM1 NTPase family. In terms of assembly, homodimer. It depends on Mg(2+) as a cofactor.

It catalyses the reaction XTP + H2O = XMP + diphosphate + H(+). The catalysed reaction is dITP + H2O = dIMP + diphosphate + H(+). The enzyme catalyses ITP + H2O = IMP + diphosphate + H(+). Its function is as follows. Pyrophosphatase that catalyzes the hydrolysis of nucleoside triphosphates to their monophosphate derivatives, with a high preference for the non-canonical purine nucleotides XTP (xanthosine triphosphate), dITP (deoxyinosine triphosphate) and ITP. Seems to function as a house-cleaning enzyme that removes non-canonical purine nucleotides from the nucleotide pool, thus preventing their incorporation into DNA/RNA and avoiding chromosomal lesions. The chain is dITP/XTP pyrophosphatase from Mycobacterium tuberculosis (strain CDC 1551 / Oshkosh).